The following is a 318-amino-acid chain: Acetyl-coenzyme A carboxylase carboxyl transferase subunit alpha (318 aa).

The 262-residue stretch at 32 to 293 folds into the CoA carboxyltransferase C-terminal domain; sequence DLSQEIESLE…KKALQKHLGE (262 aa).

This sequence belongs to the AccA family. Acetyl-CoA carboxylase is a heterohexamer composed of biotin carboxyl carrier protein (AccB), biotin carboxylase (AccC) and two subunits each of ACCase subunit alpha (AccA) and ACCase subunit beta (AccD).

It localises to the cytoplasm. It catalyses the reaction N(6)-carboxybiotinyl-L-lysyl-[protein] + acetyl-CoA = N(6)-biotinyl-L-lysyl-[protein] + malonyl-CoA. Its pathway is lipid metabolism; malonyl-CoA biosynthesis; malonyl-CoA from acetyl-CoA: step 1/1. Its function is as follows. Component of the acetyl coenzyme A carboxylase (ACC) complex. First, biotin carboxylase catalyzes the carboxylation of biotin on its carrier protein (BCCP) and then the CO(2) group is transferred by the carboxyltransferase to acetyl-CoA to form malonyl-CoA. The protein is Acetyl-coenzyme A carboxylase carboxyl transferase subunit alpha of Syntrophomonas wolfei subsp. wolfei (strain DSM 2245B / Goettingen).